The chain runs to 182 residues: Dephospho-CoA kinase (182 aa).

Positions 4-182 (VVAITGGIGS…IINNDHKIMT (179 aa)) constitute a DPCK domain. Residue 12 to 17 (GSGKTT) participates in ATP binding.

Belongs to the CoaE family.

It localises to the cytoplasm. It carries out the reaction 3'-dephospho-CoA + ATP = ADP + CoA + H(+). The protein operates within cofactor biosynthesis; coenzyme A biosynthesis; CoA from (R)-pantothenate: step 5/5. In terms of biological role, catalyzes the phosphorylation of the 3'-hydroxyl group of dephosphocoenzyme A to form coenzyme A. The polypeptide is Dephospho-CoA kinase (Aliivibrio fischeri (strain ATCC 700601 / ES114) (Vibrio fischeri)).